Reading from the N-terminus, the 96-residue chain is Co-chaperonin GroES (96 aa).

This sequence belongs to the GroES chaperonin family. Heptamer of 7 subunits arranged in a ring. Interacts with the chaperonin GroEL.

It localises to the cytoplasm. In terms of biological role, together with the chaperonin GroEL, plays an essential role in assisting protein folding. The GroEL-GroES system forms a nano-cage that allows encapsulation of the non-native substrate proteins and provides a physical environment optimized to promote and accelerate protein folding. GroES binds to the apical surface of the GroEL ring, thereby capping the opening of the GroEL channel. In Legionella micdadei (Tatlockia micdadei), this protein is Co-chaperonin GroES.